A 393-amino-acid chain; its full sequence is MNVTTTRKDLMIVNMGPHHPSMHGVLRLILTLDGEDVIDCEPILGYLHRGMEKIAENRTVIQYLPYVTRWDYLATMFTEAITVNGPEQLGNIQVPKRASYIRVIMLELSRIASHLLWLGPFMADIGAQTPFFYIFRERELVYDLFEAATGMRMMHNYFRIGGVAADLPYGWIDKCLDFCDYFLTAVSEYQKLITRNPIFLERVEGVGIIGPEEAINWGLSGPMLRASGIQWDLRKVDHYECYDELDWEIFWQKEGDSLARYLVRIGEMRESIKIIQQALEGIPGGPYENLETRCFARERDPEWNDFEYRFISKKPSPTFELPKQELYVRVEAPKGELGIFLIGDQSGFPWRWKIRPPGFINLQILPQLVKRMKLADIMTILGSIDIIMGEVDR.

It belongs to the complex I 49 kDa subunit family. NDH is composed of at least 16 different subunits, 5 of which are encoded in the nucleus.

The protein resides in the plastid. The protein localises to the chloroplast thylakoid membrane. It carries out the reaction a plastoquinone + NADH + (n+1) H(+)(in) = a plastoquinol + NAD(+) + n H(+)(out). It catalyses the reaction a plastoquinone + NADPH + (n+1) H(+)(in) = a plastoquinol + NADP(+) + n H(+)(out). NDH shuttles electrons from NAD(P)H:plastoquinone, via FMN and iron-sulfur (Fe-S) centers, to quinones in the photosynthetic chain and possibly in a chloroplast respiratory chain. The immediate electron acceptor for the enzyme in this species is believed to be plastoquinone. Couples the redox reaction to proton translocation, and thus conserves the redox energy in a proton gradient. The chain is NAD(P)H-quinone oxidoreductase subunit H, chloroplastic from Eucalyptus globulus subsp. globulus (Tasmanian blue gum).